Reading from the N-terminus, the 522-residue chain is Amine oxidase [flavin-containing] (522 aa).

Topologically, residues 1–492 (MTANAYDVIV…WERNLPSVGG (492 aa)) are cytoplasmic. At cysteine 398 the chain carries S-8alpha-FAD cysteine. The chain crosses the membrane as a helical; Anchor for type IV membrane protein span at residues 493–513 (FLKFMGVSSFLAAATAAGLVA). Over 514–522 (CKKGLLPRC) the chain is Mitochondrial intermembrane.

The protein belongs to the flavin monoamine oxidase family. In terms of assembly, monomer, homo- or heterodimer (containing two subunits of similar size). Each subunit contains a covalently bound flavin. Enzymatically active as monomer. FAD serves as cofactor. Strongest expression in brain and intestine, followed by liver, heart and gill. Little expression in spleen, eye or muscle. In brain, highest activity in noradrenergic and serotonergic cell groups and those of the habenulointerpeduncular pathway; moderate levels in dopaminergic cell clusters.

The protein resides in the mitochondrion outer membrane. It carries out the reaction a secondary aliphatic amine + O2 + H2O = a primary amine + an aldehyde + H2O2. The catalysed reaction is a primary methyl amine + O2 + H2O = an aldehyde + H2O2 + NH4(+). It catalyses the reaction serotonin + O2 + H2O = (5-hydroxyindol-3-yl)acetaldehyde + H2O2 + NH4(+). The enzyme catalyses 2-phenylethylamine + O2 + H2O = 2-phenylacetaldehyde + H2O2 + NH4(+). It carries out the reaction tyramine + O2 + H2O = (4-hydroxyphenyl)acetaldehyde + H2O2 + NH4(+). The catalysed reaction is dopamine + O2 + H2O = 3,4-dihydroxyphenylacetaldehyde + H2O2 + NH4(+). It catalyses the reaction (R)-adrenaline + O2 + H2O = (R)-3,4-dihydroxymandelaldehyde + methylamine + H2O2. The enzyme catalyses (R)-noradrenaline + O2 + H2O = (R)-3,4-dihydroxymandelaldehyde + H2O2 + NH4(+). It carries out the reaction kynuramine + O2 + H2O = 3-(2-aminophenyl)-3-oxopropanal + H2O2 + NH4(+). The catalysed reaction is tryptamine + O2 + H2O = indole-3-acetaldehyde + H2O2 + NH4(+). Inhibited by both clorgyline (selective MAOA inhibitor) and deprenyl (selective MAOB inhibitor). Its function is as follows. Catalyzes the oxidative deamination of biogenic and xenobiotic amines and has important functions in the metabolism of neuroactive and vasoactive amines in the central nervous system and peripheral tissues. Preferentially oxidizes serotonin and tyramine. Also catalyzes the oxidative deamination of kynuramine to 3-(2-aminophenyl)-3-oxopropanal that can spontaneously condense to 4-hydroxyquinoline. In Danio rerio (Zebrafish), this protein is Amine oxidase [flavin-containing].